The primary structure comprises 287 residues: Kit ligand (287 aa).

The first 25 residues, Met1–Thr25, serve as a signal peptide directing secretion. Over Gln26–Gln225 the chain is Extracellular. Intrachain disulfides connect Cys29–Cys117 and Cys68–Cys167. 6 N-linked (GlcNAc...) asparagine glycosylation sites follow: Asn100, Asn106, Asn149, Asn178, Asn200, and Asn206. The helical transmembrane segment at Gly226–Ile246 threads the bilayer. Over Tyr247–Val287 the chain is Cytoplasmic.

Belongs to the SCF family. Homodimer, non-covalently linked. Post-translationally, a soluble form is produced by proteolytic processing of isoform 1 in the extracellular domain.

Its subcellular location is the cell membrane. It is found in the secreted. The protein resides in the cytoplasm. It localises to the cytoskeleton. The protein localises to the cell projection. Its subcellular location is the lamellipodium. It is found in the filopodium. Ligand for the receptor-type protein-tyrosine kinase KIT. Plays an essential role in the regulation of cell survival and proliferation, hematopoiesis, stem cell maintenance, gametogenesis, mast cell development, migration and function, and in melanogenesis. KITLG/SCF binding can activate several signaling pathways. Acts synergistically with other cytokines, probably interleukins. The protein is Kit ligand (KITLG) of Coturnix japonica (Japanese quail).